The following is an 88-amino-acid chain: Putative membrane protein insertion efficiency factor (88 aa).

The protein belongs to the UPF0161 family.

The protein localises to the cell membrane. Could be involved in insertion of integral membrane proteins into the membrane. In Exiguobacterium sibiricum (strain DSM 17290 / CCUG 55495 / CIP 109462 / JCM 13490 / 255-15), this protein is Putative membrane protein insertion efficiency factor.